Here is a 345-residue protein sequence, read N- to C-terminus: Transcription factor STKL1 (345 aa).

Positions 1–145 (MASLENPAID…KKGHAQRVWS (145 aa)) are disordered. The span at 11-22 (SSSEFESSSEEI) shows a compositional bias: low complexity. The span at 23-32 (SSSKESKPKE) shows a compositional bias: basic and acidic residues. The segment covering 37–46 (VPSTKTLNSP) has biased composition (polar residues). Phosphoserine is present on S105. The span at 114-137 (RASEGTTSRDMHVKRIKKEGDNKK) shows a compositional bias: basic and acidic residues.

It belongs to the GeBP family. In terms of tissue distribution, expressed strongly in leaves and flowers, weakly in roots, and very weakly in stems.

It is found in the nucleus. Transcription repressor that binds DNA in a sequence-specific manner, 5'-GCCT-3', to regulate the expression of PGR. Acts as a modulatory component for the glucose-triggered developmental leaf growth process. The protein is Transcription factor STKL1 of Arabidopsis thaliana (Mouse-ear cress).